Reading from the N-terminus, the 360-residue chain is MKTSMQSKLDQLTTRLAELNDLLSRENVTADLDQYRKLTREHAEIGPVVEHYAQWRQARADELAAQELLADASMRDFAEDELRGARERMSRLAAELQTMLLPKDPNDERNIFVEIRAGTGGDESALFAGDLLRMYLRYAERQRWQVEMMSESPSDLGGYKEVIVRIAGYGAYSRLKFESGGHRVQRVPATETQGRIHTSACTVAVMPEADEIGEVEINPADLRIDTFRASGAGGQHINKTDSAVRVTHIPTGIVVECQDDRSQHKNKDRALKVLAARIKDKQYHEQHAKEAATRKSLIGSGDRSERIRTYNFPQGRMTDHRINLTLYKLEQIMDGDLDELIAALVSEHQAELLASLGDAE.

Glutamine 235 is modified (N5-methylglutamine).

Belongs to the prokaryotic/mitochondrial release factor family. Methylated by PrmC. Methylation increases the termination efficiency of RF1.

It localises to the cytoplasm. Functionally, peptide chain release factor 1 directs the termination of translation in response to the peptide chain termination codons UAG and UAA. In Burkholderia thailandensis (strain ATCC 700388 / DSM 13276 / CCUG 48851 / CIP 106301 / E264), this protein is Peptide chain release factor 1.